The chain runs to 385 residues: DnaJ homolog subfamily C member 28 (385 aa).

Positions Glu48–Gln132 constitute a J domain. Positions Lys261–Val318 form a coiled coil.

Its function is as follows. May have a role in protein folding or as a chaperone. The sequence is that of DnaJ homolog subfamily C member 28 (Dnajc28) from Mus musculus (Mouse).